We begin with the raw amino-acid sequence, 186 residues long: Probable calcium-binding protein CML25 (186 aa).

Residues 1-17 (MFNKNQGSNGGSSSNVG) show a composition bias toward low complexity. Positions 1–23 (MFNKNQGSNGGSSSNVGIGADSP) are disordered. 4 EF-hand domains span residues 33-68 (TEIRELEAVFKKFDVNGDGKISSKELGAIMTSLGHE), 69-104 (VPEEELEKAITEIDRKGDGYINFEEFVELNTKGMDQ), 106-141 (DVLENLKDAFSVYDIDGNGSISAEELHEVLRSLGDE), and 142-177 (CSIAECRKMIGGVDKDGDGTIDFEEFKIMMTMGSRR). Residues Asp-46, Asn-48, Asp-50, Lys-52, and Glu-57 each coordinate Ca(2+). Residues Asp-119, Asp-121, Asn-123, Ser-125, Glu-130, Asp-155, Asp-157, Asp-159, Thr-161, and Glu-166 each contribute to the Ca(2+) site.

Functionally, potential calcium sensor. The polypeptide is Probable calcium-binding protein CML25 (CML25) (Arabidopsis thaliana (Mouse-ear cress)).